We begin with the raw amino-acid sequence, 423 residues long: Adenylosuccinate synthetase (423 aa).

GTP-binding positions include 12 to 18 and 40 to 42; these read GDEGKGK and GHT. D13 acts as the Proton acceptor in catalysis. Residues D13 and G40 each contribute to the Mg(2+) site. IMP contacts are provided by residues 13–16, 38–41, T129, R143, Q221, T236, and R300; these read DEGK and NAGH. H41 acts as the Proton donor in catalysis. 296 to 302 lines the substrate pocket; it reads AVTGRER. Residues R302, 328-330, and 408-410 each bind GTP; these read KSD and SVG.

This sequence belongs to the adenylosuccinate synthetase family. Homodimer. Mg(2+) serves as cofactor.

It is found in the cytoplasm. It carries out the reaction IMP + L-aspartate + GTP = N(6)-(1,2-dicarboxyethyl)-AMP + GDP + phosphate + 2 H(+). The protein operates within purine metabolism; AMP biosynthesis via de novo pathway; AMP from IMP: step 1/2. Plays an important role in the de novo pathway of purine nucleotide biosynthesis. Catalyzes the first committed step in the biosynthesis of AMP from IMP. The polypeptide is Adenylosuccinate synthetase (Phocaeicola vulgatus (strain ATCC 8482 / DSM 1447 / JCM 5826 / CCUG 4940 / NBRC 14291 / NCTC 11154) (Bacteroides vulgatus)).